The following is an 82-amino-acid chain: Cytochrome b559 subunit alpha (82 aa).

The chain crosses the membrane as a helical span at residues 22–36 (IIHAVTLPAIFIAGF). Heme is bound at residue His24.

The protein belongs to the PsbE/PsbF family. Heterodimer of an alpha subunit and a beta subunit. PSII is composed of 1 copy each of membrane proteins PsbA, PsbB, PsbC, PsbD, PsbE, PsbF, PsbH, PsbI, PsbJ, PsbK, PsbL, PsbM, PsbT, PsbX, PsbY, Psb30/Ycf12, peripheral proteins PsbO, CyanoQ (PsbQ), PsbU, PsbV and a large number of cofactors. It forms dimeric complexes. Heme b serves as cofactor.

It is found in the cellular thylakoid membrane. Functionally, this b-type cytochrome is tightly associated with the reaction center of photosystem II (PSII). PSII is a light-driven water:plastoquinone oxidoreductase that uses light energy to abstract electrons from H(2)O, generating O(2) and a proton gradient subsequently used for ATP formation. It consists of a core antenna complex that captures photons, and an electron transfer chain that converts photonic excitation into a charge separation. This Prochlorococcus marinus (strain SARG / CCMP1375 / SS120) protein is Cytochrome b559 subunit alpha.